The sequence spans 861 residues: Bifunctional uridylyltransferase/uridylyl-removing enzyme (861 aa).

Residues 1-321 (MKNDNRIIKN…VYHQKQKIIR (321 aa)) form a uridylyltransferase region. A uridylyl-removing region spans residues 322–678 (LDDEFQLSNR…IMPHHSQGGT (357 aa)). The region spanning 440–562 (VDQHTLFVIR…LPHARYLDYL (123 aa)) is the HD domain. 2 ACT domains span residues 679 to 760 (EVFI…AVSR) and 788 to 861 (QLFL…KSKY).

It belongs to the GlnD family. Requires Mg(2+) as cofactor.

It catalyses the reaction [protein-PII]-L-tyrosine + UTP = [protein-PII]-uridylyl-L-tyrosine + diphosphate. It carries out the reaction [protein-PII]-uridylyl-L-tyrosine + H2O = [protein-PII]-L-tyrosine + UMP + H(+). Its activity is regulated as follows. Uridylyltransferase (UTase) activity is inhibited by glutamine, while glutamine activates uridylyl-removing (UR) activity. Functionally, modifies, by uridylylation and deuridylylation, the PII regulatory proteins (GlnB and homologs), in response to the nitrogen status of the cell that GlnD senses through the glutamine level. Under low glutamine levels, catalyzes the conversion of the PII proteins and UTP to PII-UMP and PPi, while under higher glutamine levels, GlnD hydrolyzes PII-UMP to PII and UMP (deuridylylation). Thus, controls uridylylation state and activity of the PII proteins, and plays an important role in the regulation of nitrogen assimilation and metabolism. The sequence is that of Bifunctional uridylyltransferase/uridylyl-removing enzyme from Legionella pneumophila subsp. pneumophila (strain Philadelphia 1 / ATCC 33152 / DSM 7513).